Reading from the N-terminus, the 641-residue chain is Chaperone protein DnaK (641 aa).

Thr-199 carries the post-translational modification Phosphothreonine; by autocatalysis. Residues 603-627 (YGQQQAEGGAQAAGAAGGSSKADDA) form a disordered region. The segment covering 604 to 616 (GQQQAEGGAQAAG) has biased composition (low complexity).

The protein belongs to the heat shock protein 70 family.

Acts as a chaperone. In Azoarcus sp. (strain BH72), this protein is Chaperone protein DnaK.